Reading from the N-terminus, the 356-residue chain is Pyrimidine monooxygenase RutA (356 aa).

FMN is bound by residues 49–50, Asn115, Glu124, 140–141, and Ser190; these read IK and RY.

It belongs to the NtaA/SnaA/DszA monooxygenase family. RutA subfamily.

The catalysed reaction is uracil + FMNH2 + NADH + O2 = (Z)-3-ureidoacrylate + FMN + NAD(+) + H2O + H(+). It carries out the reaction thymine + FMNH2 + NADH + O2 = (Z)-2-methylureidoacrylate + FMN + NAD(+) + H2O + H(+). Its function is as follows. Catalyzes the pyrimidine ring opening between N-3 and C-4 by an unusual flavin hydroperoxide-catalyzed mechanism, adding oxygen atoms in the process to yield ureidoacrylate peracid, that immediately reacts with FMN forming ureidoacrylate and FMN-N(5)-oxide. The FMN-N(5)-oxide reacts spontaneously with NADH to produce FMN. Requires the flavin reductase RutF to regenerate FMN in vivo. The protein is Pyrimidine monooxygenase RutA of Haliangium ochraceum (strain DSM 14365 / JCM 11303 / SMP-2).